A 304-amino-acid polypeptide reads, in one-letter code: UDP-3-O-acyl-N-acetylglucosamine deacetylase (304 aa).

Residues His-78, His-237, and Asp-241 each contribute to the Zn(2+) site. The active-site Proton donor is His-264.

It belongs to the LpxC family. Zn(2+) serves as cofactor.

The catalysed reaction is a UDP-3-O-[(3R)-3-hydroxyacyl]-N-acetyl-alpha-D-glucosamine + H2O = a UDP-3-O-[(3R)-3-hydroxyacyl]-alpha-D-glucosamine + acetate. Its pathway is glycolipid biosynthesis; lipid IV(A) biosynthesis; lipid IV(A) from (3R)-3-hydroxytetradecanoyl-[acyl-carrier-protein] and UDP-N-acetyl-alpha-D-glucosamine: step 2/6. Catalyzes the hydrolysis of UDP-3-O-myristoyl-N-acetylglucosamine to form UDP-3-O-myristoylglucosamine and acetate, the committed step in lipid A biosynthesis. This chain is UDP-3-O-acyl-N-acetylglucosamine deacetylase, found in Alcanivorax borkumensis (strain ATCC 700651 / DSM 11573 / NCIMB 13689 / SK2).